The chain runs to 754 residues: Neprilysin-1 (754 aa).

The helical; Signal-anchor for type II membrane protein transmembrane segment at 5–27 (FGPPIVFLISCYALILCGTVDAL) threads the bilayer. 7 N-linked (GlcNAc...) asparagine glycosylation sites follow: N38, N81, N132, N217, N273, N303, and N441. Residues 63-754 (VGDSEGYQEA…MNPTKRCVVW (692 aa)) enclose the Peptidase M13 domain. 4 cysteine pairs are disulfide-bonded: C87-C739, C95-C699, C151-C414, and C624-C751. H587 contributes to the Zn(2+) binding site. E588 is a catalytic residue. H591 contributes to the Zn(2+) binding site. Residue N612 is glycosylated (N-linked (GlcNAc...) asparagine). A Zn(2+)-binding site is contributed by E649. The Proton donor role is filled by D653.

The protein belongs to the peptidase M13 family. Zn(2+) is required as a cofactor. As to expression, specifically expressed in pharyngeal cells and a single head neuron.

Its subcellular location is the membrane. In terms of biological role, probable cell surface protease. Required to control the neuronal innervation of pharyngeal pumping. In Caenorhabditis elegans, this protein is Neprilysin-1 (nep-1).